A 954-amino-acid chain; its full sequence is Isoleucine--tRNA ligase (954 aa).

The short motif at 60-70 (PYANGALHMGH) is the 'HIGH' region element. An L-isoleucyl-5'-AMP-binding site is contributed by E564. Positions 605 to 609 (KMSKS) match the 'KMSKS' region motif. K608 provides a ligand contact to ATP. Residues C923, C926, C943, and C946 each contribute to the Zn(2+) site.

It belongs to the class-I aminoacyl-tRNA synthetase family. IleS type 1 subfamily. Monomer. Requires Zn(2+) as cofactor.

The protein localises to the cytoplasm. The enzyme catalyses tRNA(Ile) + L-isoleucine + ATP = L-isoleucyl-tRNA(Ile) + AMP + diphosphate. Catalyzes the attachment of isoleucine to tRNA(Ile). As IleRS can inadvertently accommodate and process structurally similar amino acids such as valine, to avoid such errors it has two additional distinct tRNA(Ile)-dependent editing activities. One activity is designated as 'pretransfer' editing and involves the hydrolysis of activated Val-AMP. The other activity is designated 'posttransfer' editing and involves deacylation of mischarged Val-tRNA(Ile). This chain is Isoleucine--tRNA ligase, found in Synechococcus sp. (strain ATCC 27144 / PCC 6301 / SAUG 1402/1) (Anacystis nidulans).